The primary structure comprises 1100 residues: Guanylate cyclase 2G (1100 aa).

The first 43 residues, 1–43 (MASRARSEPPLEHRFYGGAESHAGHSSLVLTLFVVMLMTCLEA), serve as a signal peptide directing secretion. The Extracellular portion of the chain corresponds to 44–481 (AKLTVGFHAP…GAGMTASVTA (438 aa)). 5 N-linked (GlcNAc...) asparagine glycosylation sites follow: asparagine 55, asparagine 85, asparagine 94, asparagine 418, and asparagine 443. Residues 482 to 502 (VIPTVTLLVVASAAAITGLML) form a helical membrane-spanning segment. At 503 to 1100 (WRLRGKVQNH…EEEAKVPEIL (598 aa)) the chain is on the cytoplasmic side. One can recognise a Protein kinase domain in the interval 549-826 (STVKISADCG…PAFPSIKKTL (278 aa)). In terms of domain architecture, Guanylate cyclase spans 901 to 1031 (TIFFSDIVGF…DTVNMASRME (131 aa)).

It belongs to the adenylyl cyclase class-4/guanylyl cyclase family. In terms of assembly, homooligomer. May interact with NPR1/GC-A. N-glycosylated. Expressed in lung, kidney and skeletal muscle. Low levels in intestine.

Its subcellular location is the cell membrane. The protein localises to the cytoplasm. The enzyme catalyses GTP = 3',5'-cyclic GMP + diphosphate. This chain is Guanylate cyclase 2G (Gucy2g), found in Rattus norvegicus (Rat).